The primary structure comprises 87 residues: MAKEEVIEMEGVVNEVLPQTRFRVTLDNGFEITAYASGKMRKHRIRILAGDKVTVEMSPYDLTKGRINFRHKDAHQAPRPTVARRYN.

The region spanning 1-72 (MAKEEVIEME…TKGRINFRHK (72 aa)) is the S1-like domain.

Belongs to the IF-1 family. In terms of assembly, component of the 30S ribosomal translation pre-initiation complex which assembles on the 30S ribosome in the order IF-2 and IF-3, IF-1 and N-formylmethionyl-tRNA(fMet); mRNA recruitment can occur at any time during PIC assembly.

Its subcellular location is the cytoplasm. One of the essential components for the initiation of protein synthesis. Stabilizes the binding of IF-2 and IF-3 on the 30S subunit to which N-formylmethionyl-tRNA(fMet) subsequently binds. Helps modulate mRNA selection, yielding the 30S pre-initiation complex (PIC). Upon addition of the 50S ribosomal subunit IF-1, IF-2 and IF-3 are released leaving the mature 70S translation initiation complex. The chain is Translation initiation factor IF-1 2 from Thiobacillus denitrificans (strain ATCC 25259 / T1).